Here is a 536-residue protein sequence, read N- to C-terminus: MEFSSPSREECPKPLSRVSIMAGSLTGLLLLQAVSWASGARPCIPKSFGYSSVVCVCNATYCDSFDPPTFPALGTFSRYESTRSGRRMELSMGPIQANHTGTGLLLTLQPEQKFQKVKGFGGAMTDAAALNILALSPPAQNLLLKSYFSEEGIGYNIIRVPMASCDFSIRTYTYADTPDDFQLHNFSLPEEDTKLKIPLIHRALQLAQRPVSLLASPWTSPTWLKTNGAVNGKGSLKGQPGDIYHQTWARYFVKFLDAYAEHKLQFWAVTAENEPSAGLLSGYPFQCLGFTPEHQRDFIARDLGPTLANSTHHNVRLLMLDDQRLLLPHWAKVVLTDPEAAKYVHGIAVHWYLDFLAPAKATLGETHRLFPNTMLFASEACVGSKFWEQSVRLGSWDRGMQYSHSIITNLLYHVVGWTDWNLALNPEGGPNWVRNFVDSPIIVDITKDTFYKQPMFYHLGHFSKFIPEGSQRVGLVASQKNDLDAVALMHPDGSAVVVVLNRSSKDVPLTIKDPAVGFLETISPGYSIHTYLWRRQ.

An N-terminal signal peptide occupies residues 1–39 (MEFSSPSREECPKPLSRVSIMAGSLTGLLLLQAVSWASG). 2 disulfides stabilise this stretch: Cys43–Cys55 and Cys57–Cys62. Asn58, Asn98, and Asn185 each carry an N-linked (GlcNAc...) asparagine glycan. The active-site Proton donor is the Glu274. An N-linked (GlcNAc...) asparagine glycan is attached at Asn309. The active-site Nucleophile is the Glu379. N-linked (GlcNAc...) asparagine glycosylation is present at Asn501.

Belongs to the glycosyl hydrolase 30 family. Interacts with saposin-C. Interacts with SCARB2. Interacts with TCP1. May interacts with SNCA; this interaction may inhibit the glucosylceramidase activity. Interacts with GRN; this interaction prevents aggregation of GBA1-SCARB2 complex via interaction with HSPA1A upon stress.

Its subcellular location is the lysosome membrane. The enzyme catalyses a beta-D-glucosyl-(1&lt;-&gt;1')-N-acylsphing-4-enine + H2O = an N-acylsphing-4-enine + D-glucose. The catalysed reaction is a beta-D-galactosyl-(1&lt;-&gt;1')-N-acylsphing-4-enine + H2O = an N-acylsphing-4-enine + D-galactose. It catalyses the reaction cholesteryl 3-beta-D-glucoside + H2O = cholesterol + D-glucose. It carries out the reaction a beta-D-glucosyl-(1&lt;-&gt;1')-N-acylsphing-4-enine + cholesterol = cholesteryl 3-beta-D-glucoside + an N-acylsphing-4-enine. The enzyme catalyses beta-D-glucosyl-N-(9Z-octadecenoyl)-sphing-4E-enine + cholesterol = N-(9Z-octadecenoyl)-sphing-4-enine + cholesteryl 3-beta-D-glucoside. The catalysed reaction is beta-D-glucosyl-(1&lt;-&gt;1')-N-hexadecanoylsphing-4-enine + cholesterol = cholesteryl 3-beta-D-glucoside + N-hexadecanoylsphing-4-enine. It catalyses the reaction beta-D-glucosyl-N-octanoylsphing-4E-enine + cholesterol = N-octanoylsphing-4-enine + cholesteryl 3-beta-D-glucoside. It carries out the reaction beta-D-glucosyl-N-dodecanoylsphing-4-enine + cholesterol = N-dodecanoylsphing-4-enine + cholesteryl 3-beta-D-glucoside. The enzyme catalyses beta-D-glucosyl-(1&lt;-&gt;1)-N-octadecanoylsphing-4-enine + cholesterol = N-octadecanoylsphing-4-enine + cholesteryl 3-beta-D-glucoside. The catalysed reaction is beta-D-glucosyl-(1&lt;-&gt;1')-N-(15Z-tetracosenoyl)-sphing-4-enine + cholesterol = N-(15Z-tetracosenoyl)-sphing-4-enine + cholesteryl 3-beta-D-glucoside. It catalyses the reaction a beta-D-galactosyl-(1&lt;-&gt;1')-N-acylsphing-4-enine + cholesterol = cholesteryl 3-beta-D-galactoside + an N-acylsphing-4-enine. It carries out the reaction 1-(beta-D-galactosyl)-N-dodecanoylsphing-4-enine + cholesterol = cholesteryl 3-beta-D-galactoside + N-dodecanoylsphing-4-enine. The enzyme catalyses a beta-D-xylosyl-(1&lt;-&gt;1')-N-acylsphing-4-enine + cholesterol = cholesteryl 3-beta-D-xyloside + an N-acylsphing-4-enine. The catalysed reaction is beta-D-xylosyl-(1&lt;-&gt;1')-N-(9Z-octadecenoyl)-sphing-4-enine + cholesterol = cholesteryl 3-beta-D-xyloside + N-(9Z-octadecenoyl)-sphing-4-enine. Its pathway is steroid metabolism; cholesterol metabolism. It participates in sphingolipid metabolism. With respect to regulation, synergistically activated by saposin-A and saposin-C, two saposin peptides produced by proteolytic processing of prosaposin/PSAP. Saposin-C activates GBA1 through its recruitment to membranes. The membrane structure and composition in anionic phospholipids are also important for the activation. Activated by PKC in the salvage pathway of ceramide formation. Inhibited by conduritol B epoxide/CBE. Glucosylceramidase that catalyzes, within the lysosomal compartment, the hydrolysis of glucosylceramides/GlcCers (such as beta-D-glucosyl-(1&lt;-&gt;1')-N-acylsphing-4-enine) into free ceramides (such as N-acylsphing-4-enine) and glucose. Plays a central role in the degradation of complex lipids and the turnover of cellular membranes. Through the production of ceramides, participates in the PKC-activated salvage pathway of ceramide formation. Catalyzes the glucosylation of cholesterol, through a transglucosylation reaction where glucose is transferred from GlcCer to cholesterol. GlcCer containing mono-unsaturated fatty acids (such as beta-D-glucosyl-N-(9Z-octadecenoyl)-sphing-4-enine) are preferred as glucose donors for cholesterol glucosylation when compared with GlcCer containing same chain length of saturated fatty acids (such as beta-D-glucosyl-N-octadecanoyl-sphing-4-enine). Under specific conditions, may alternatively catalyze the reverse reaction, transferring glucose from cholesteryl 3-beta-D-glucoside to ceramide. Can also hydrolyze cholesteryl 3-beta-D-glucoside producing glucose and cholesterol. Catalyzes the hydrolysis of galactosylceramides/GalCers (such as beta-D-galactosyl-(1&lt;-&gt;1')-N-acylsphing-4-enine), as well as the transfer of galactose between GalCers and cholesterol in vitro, but with lower activity than with GlcCers. Contrary to GlcCer and GalCer, xylosylceramide/XylCer (such as beta-D-xyosyl-(1&lt;-&gt;1')-N-acylsphing-4-enine) is not a good substrate for hydrolysis, however it is a good xylose donor for transxylosylation activity to form cholesteryl 3-beta-D-xyloside. This is Lysosomal acid glucosylceramidase from Homo sapiens (Human).